The chain runs to 321 residues: Lipoyl synthase (321 aa).

7 residues coordinate [4Fe-4S] cluster: Cys-60, Cys-65, Cys-71, Cys-86, Cys-90, Cys-93, and Ser-299. One can recognise a Radical SAM core domain in the interval 72 to 288 (WEKKHATFMI…ETIGRTKGFL (217 aa)).

This sequence belongs to the radical SAM superfamily. Lipoyl synthase family. It depends on [4Fe-4S] cluster as a cofactor.

It localises to the cytoplasm. It carries out the reaction [[Fe-S] cluster scaffold protein carrying a second [4Fe-4S](2+) cluster] + N(6)-octanoyl-L-lysyl-[protein] + 2 oxidized [2Fe-2S]-[ferredoxin] + 2 S-adenosyl-L-methionine + 4 H(+) = [[Fe-S] cluster scaffold protein] + N(6)-[(R)-dihydrolipoyl]-L-lysyl-[protein] + 4 Fe(3+) + 2 hydrogen sulfide + 2 5'-deoxyadenosine + 2 L-methionine + 2 reduced [2Fe-2S]-[ferredoxin]. The protein operates within protein modification; protein lipoylation via endogenous pathway; protein N(6)-(lipoyl)lysine from octanoyl-[acyl-carrier-protein]: step 2/2. Catalyzes the radical-mediated insertion of two sulfur atoms into the C-6 and C-8 positions of the octanoyl moiety bound to the lipoyl domains of lipoate-dependent enzymes, thereby converting the octanoylated domains into lipoylated derivatives. In Brucella anthropi (strain ATCC 49188 / DSM 6882 / CCUG 24695 / JCM 21032 / LMG 3331 / NBRC 15819 / NCTC 12168 / Alc 37) (Ochrobactrum anthropi), this protein is Lipoyl synthase.